Here is a 419-residue protein sequence, read N- to C-terminus: Phosphatidylinositol 5-phosphate 4-kinase type-2 gamma (419 aa).

Positions 46–418 (ASDPLISVFM…RFLEFVTNIF (373 aa)) constitute a PIPK domain. The span at 299 to 310 (QEEEEDLEEDHT) shows a compositional bias: acidic residues. Residues 299–320 (QEEEEDLEEDHTENESSPHMNV) are disordered.

Post-translationally, phosphorylated, phosphorylation is induced by EGF.

It is found in the endoplasmic reticulum. The protein resides in the cytoplasm. The catalysed reaction is a 1,2-diacyl-sn-glycero-3-phospho-(1D-myo-inositol-5-phosphate) + ATP = a 1,2-diacyl-sn-glycero-3-phospho-(1D-myo-inositol-4,5-bisphosphate) + ADP + H(+). It catalyses the reaction 1,2-dihexadecanoyl-sn-glycero-3-phospho-(1D-myo-inositol-5-phosphate) + ATP = 1,2-dihexadecanoyl-sn-glycero-3-phospho-(1D-myo-inositol-4,5-bisphosphate) + ADP + H(+). The enzyme catalyses 1,2-dihexadecanoyl-sn-glycero-3-phospho-(1D-myo-inositol-5-phosphate) + GTP = 1,2-dihexadecanoyl-sn-glycero-3-phospho-(1D-myo-inositol-4,5-bisphosphate) + GDP + H(+). Phosphatidylinositol 5-phosphate 4-kinase with low enzymatic activity. May be a GTP sensor, has higher GTP-dependent kinase activity than ATP-dependent kinase activity. In Xenopus tropicalis (Western clawed frog), this protein is Phosphatidylinositol 5-phosphate 4-kinase type-2 gamma (pip4k2c).